The primary structure comprises 120 residues: Glycine cleavage system H protein (120 aa).

In terms of domain architecture, Lipoyl-binding spans 17 to 99 (IATVGITSHA…QGAGWLYRMR (83 aa)). At Lys-58 the chain carries N6-lipoyllysine.

This sequence belongs to the GcvH family. The glycine cleavage system is composed of four proteins: P, T, L and H. It depends on (R)-lipoate as a cofactor.

Functionally, the glycine cleavage system catalyzes the degradation of glycine. The H protein shuttles the methylamine group of glycine from the P protein to the T protein. The protein is Glycine cleavage system H protein of Methylobacterium nodulans (strain LMG 21967 / CNCM I-2342 / ORS 2060).